The chain runs to 234 residues: Cell adhesion molecule CEACAM15 (234 aa).

Residues methionine 1 to alanine 32 form the signal peptide. 4 N-linked (GlcNAc...) asparagine glycosylation sites follow: asparagine 28, asparagine 75, asparagine 151, and asparagine 184. Residues proline 146–proline 226 enclose the Ig-like C2-type domain. Cysteine 165 and cysteine 213 are disulfide-bonded.

This sequence belongs to the immunoglobulin superfamily. CEA family. As to expression, detected in placenta.

In Mus musculus (Mouse), this protein is Cell adhesion molecule CEACAM15.